Consider the following 71-residue polypeptide: Putative membrane protein insertion efficiency factor (71 aa).

It belongs to the UPF0161 family.

Its subcellular location is the cell membrane. Could be involved in insertion of integral membrane proteins into the membrane. In Acetivibrio thermocellus (strain ATCC 27405 / DSM 1237 / JCM 9322 / NBRC 103400 / NCIMB 10682 / NRRL B-4536 / VPI 7372) (Clostridium thermocellum), this protein is Putative membrane protein insertion efficiency factor.